A 461-amino-acid chain; its full sequence is Bifunctional protein GlmU (461 aa).

The segment at 1–234 (MSLSVVILAA…EIEVEGANNR (234 aa)) is pyrophosphorylase. Residues 8 to 11 (LAAG), Lys22, Gln77, 82 to 83 (GT), 104 to 106 (YGD), Gly141, Glu159, Asn174, and Asn232 each bind UDP-N-acetyl-alpha-D-glucosamine. A Mg(2+)-binding site is contributed by Asp106. Asn232 is a binding site for Mg(2+). The segment at 235-255 (VQLATLERAYQARIAEELMIA) is linker. The N-acetyltransferase stretch occupies residues 256–461 (GASLRDPARI…AGWQRPVKKS (206 aa)). UDP-N-acetyl-alpha-D-glucosamine-binding residues include Arg338 and Lys356. His368 serves as the catalytic Proton acceptor. Residues Tyr371 and Asn382 each coordinate UDP-N-acetyl-alpha-D-glucosamine. Acetyl-CoA is bound by residues Ala385, 391–392 (NY), Ser410, Ala428, and Arg445.

In the N-terminal section; belongs to the N-acetylglucosamine-1-phosphate uridyltransferase family. The protein in the C-terminal section; belongs to the transferase hexapeptide repeat family. In terms of assembly, homotrimer. Requires Mg(2+) as cofactor.

Its subcellular location is the cytoplasm. The enzyme catalyses alpha-D-glucosamine 1-phosphate + acetyl-CoA = N-acetyl-alpha-D-glucosamine 1-phosphate + CoA + H(+). The catalysed reaction is N-acetyl-alpha-D-glucosamine 1-phosphate + UTP + H(+) = UDP-N-acetyl-alpha-D-glucosamine + diphosphate. Its pathway is nucleotide-sugar biosynthesis; UDP-N-acetyl-alpha-D-glucosamine biosynthesis; N-acetyl-alpha-D-glucosamine 1-phosphate from alpha-D-glucosamine 6-phosphate (route II): step 2/2. It participates in nucleotide-sugar biosynthesis; UDP-N-acetyl-alpha-D-glucosamine biosynthesis; UDP-N-acetyl-alpha-D-glucosamine from N-acetyl-alpha-D-glucosamine 1-phosphate: step 1/1. It functions in the pathway bacterial outer membrane biogenesis; LPS lipid A biosynthesis. Its function is as follows. Catalyzes the last two sequential reactions in the de novo biosynthetic pathway for UDP-N-acetylglucosamine (UDP-GlcNAc). The C-terminal domain catalyzes the transfer of acetyl group from acetyl coenzyme A to glucosamine-1-phosphate (GlcN-1-P) to produce N-acetylglucosamine-1-phosphate (GlcNAc-1-P), which is converted into UDP-GlcNAc by the transfer of uridine 5-monophosphate (from uridine 5-triphosphate), a reaction catalyzed by the N-terminal domain. In Colwellia psychrerythraea (strain 34H / ATCC BAA-681) (Vibrio psychroerythus), this protein is Bifunctional protein GlmU.